The sequence spans 195 residues: Cholesin (195 aa).

Positions 1–78 are disordered; sequence MAKHKRKGLE…KEEKKRLREA (78 aa). Basic and acidic residues-rich tracts occupy residues 8–18 and 26–39; these read GLEGTGKESKR and ETPR…DKET. Phosphoserine occurs at positions 41, 48, and 52. A compositionally biased stretch (basic and acidic residues) spans 53–77; that stretch reads PEERRVLERKLKKERKKEEKKRLRE. S96 carries the post-translational modification Phosphoserine.

As to expression, secreted via exosomes, secreted from the instestine, secretion is induced by feeding and cholesterol absorption. Expressed in enterocytes.

The protein localises to the secreted. Its function is as follows. Hormone secreted from the intestine in response to cholesterol, where it acts to inhibit cholesterol synthesis in the liver and VLDL secretion,leading to a reduction in circulating cholesterol levels. Acts through binding to its receptor, GPR146. This is Cholesin (Chlsn) from Mus musculus (Mouse).